Consider the following 356-residue polypeptide: Zinc finger CW-type PWWP domain protein 2 (356 aa).

The CW-type zinc-finger motif lies at 24–79 (MYVNKVWVQCENENCLKWRLLSSEDSAKVDHDEPWYCFMNTDSRYNNCSISEEDFP). Zn(2+) contacts are provided by Cys-33, Cys-38, Cys-60, and Cys-71. The PWWP domain maps to 98 to 162 (LGSLVLVKLQ…ATFVGHYSIT (65 aa)). Positions 279–307 (QALQPTATPDESEEGHGEEINMGEKLSKC) are disordered.

Functionally, histone methylation reader which binds to non-methylated (H3K4me0), monomethylated (H3K4me1), dimethylated (H3K4me2) and trimethylated (H3K4me3) 'Lys-4' on histone H3. The order of binding preference is H3K4me3 &gt; H3K4me2 &gt; H3K4me1 &gt; H3K4me0. The chain is Zinc finger CW-type PWWP domain protein 2 (ZCWPW2) from Homo sapiens (Human).